The primary structure comprises 310 residues: Bifunctional phosphoglucose/phosphomannose isomerase (310 aa).

In terms of domain architecture, SIS spans 22-152 (FDGSFRTGTF…IRPKHEDIEE (131 aa)). D-fructose 6-phosphate-binding residues include G41, S42, S80, S82, T85, and R128. Catalysis depends on E202, which acts as the Proton acceptor. The D-fructose 6-phosphate site is built by H218 and K306. The active-site Proton donor is the H218. Catalysis depends on K306, which acts as the Proton acceptor.

The protein belongs to the PGI/PMI family. As to quaternary structure, homodimer.

It carries out the reaction alpha-D-glucose 6-phosphate = beta-D-fructose 6-phosphate. The catalysed reaction is D-mannose 6-phosphate = D-fructose 6-phosphate. Inhibited by low concentrations of erythrose 4-phosphate and 6-phosphogluconate. Dual specificity isomerase that catalyzes the isomerization of both glucose-6-phosphate and mannose-6-phosphate to fructose-6-phosphate with similar catalytic efficiency. The chain is Bifunctional phosphoglucose/phosphomannose isomerase from Thermoplasma acidophilum (strain ATCC 25905 / DSM 1728 / JCM 9062 / NBRC 15155 / AMRC-C165).